A 494-amino-acid chain; its full sequence is V-type proton ATPase subunit B (494 aa).

R384 lines the ATP pocket.

Belongs to the ATPase alpha/beta chains family. In terms of assembly, V-ATPase is a heteromultimeric enzyme made up of two complexes: the ATP-hydrolytic V1 complex and the proton translocation V0 complex. The V1 complex consists of three catalytic AB heterodimers that form a heterohexamer, three peripheral stalks each consisting of EG heterodimers, one central rotor including subunits D and F, and the regulatory subunits C and H. The proton translocation complex V0 consists of the proton transport subunit a, a ring of proteolipid subunits c9c'', rotary subunit d, subunits e and f, and the accessory subunits VhaAC45 and ATP6AP2.

In terms of biological role, non-catalytic subunit of the V1 complex of vacuolar(H+)-ATPase (V-ATPase), a multisubunit enzyme composed of a peripheral complex (V1) that hydrolyzes ATP and a membrane integral complex (V0) that translocates protons. V-ATPase is responsible for acidifying and maintaining the pH of intracellular compartments and in some cell types, is targeted to the plasma membrane, where it is responsible for acidifying the extracellular environment. Essential for the proper assembly and activity of V-ATPase. This chain is V-type proton ATPase subunit B (VHA55), found in Manduca sexta (Tobacco hawkmoth).